The sequence spans 102 residues: FMRFamide-like neuropeptides 9 (102 aa).

Residues methionine 1–alanine 19 form the signal peptide. A propeptide spanning residues tyrosine 20–glutamate 63 is cleaved from the precursor. At phenylalanine 72 the chain carries Phenylalanine amide. The propeptide occupies arginine 75–aspartate 90. The residue at position 99 (phenylalanine 99) is a Phenylalanine amide.

It belongs to the FARP (FMRFamide related peptide) family. In terms of tissue distribution, each flp gene is expressed in a distinct set of neurons.

The protein localises to the secreted. In terms of biological role, FMRFamides and FMRFamide-like peptides are neuropeptides. KPSFVRF-amide: Has no effect on somatic body wall muscle, inhibits contraction of vaginal vera muscle, and inhibits the activity of the dissected pharyngeal myogenic muscle system. Acts as a ligand for the npr-22 receptor in vitro. The protein is FMRFamide-like neuropeptides 9 of Caenorhabditis elegans.